Here is a 374-residue protein sequence, read N- to C-terminus: Lactoyl-CoA dehydratase subunit beta (374 aa).

The protein belongs to the FldB/FldC dehydratase alpha/beta subunit family. In terms of assembly, heterodimer of an alpha (LcdA) and a beta (LcdB) subunit. It depends on [4Fe-4S] cluster as a cofactor. FMN serves as cofactor. Requires riboflavin as cofactor. The cofactor is Mg(2+).

The enzyme catalyses (R)-lactoyl-CoA = acryloyl-CoA + H2O. It catalyses the reaction (2R)-hydroxybutanoyl-CoA = (2E)-butenoyl-CoA + H2O. Its activity is regulated as follows. Activated by the LcdC protein. Its function is as follows. Involved in the acrylate pathway for the conversion of D-lactic acid to propionic acid. Catalyzes the reversible dehydration of Lactoyl-CoA and 2-hydroxybutyroyl-CoA to acryloyl-CoA and crotonyl-CoA, respectively. The polypeptide is Lactoyl-CoA dehydratase subunit beta (lcdB) (Anaerotignum propionicum (Clostridium propionicum)).